We begin with the raw amino-acid sequence, 263 residues long: Endonuclease 8 (263 aa).

P2 (schiff-base intermediate with DNA) is an active-site residue. E3 serves as the catalytic Proton donor. K53 (proton donor; for beta-elimination activity) is an active-site residue. DNA contacts are provided by Q70, R125, and N169. The segment at 229–263 (KVFHRDGEACERCGGIIEKTTLSSRPFYWCPHCQK) adopts an FPG-type zinc-finger fold. The active-site Proton donor; for delta-elimination activity is the R253.

Belongs to the FPG family. Zn(2+) is required as a cofactor.

It carries out the reaction 2'-deoxyribonucleotide-(2'-deoxyribose 5'-phosphate)-2'-deoxyribonucleotide-DNA = a 3'-end 2'-deoxyribonucleotide-(2,3-dehydro-2,3-deoxyribose 5'-phosphate)-DNA + a 5'-end 5'-phospho-2'-deoxyribonucleoside-DNA + H(+). In terms of biological role, involved in base excision repair of DNA damaged by oxidation or by mutagenic agents. Acts as a DNA glycosylase that recognizes and removes damaged bases. Has a preference for oxidized pyrimidines, such as thymine glycol, 5,6-dihydrouracil and 5,6-dihydrothymine. Has AP (apurinic/apyrimidinic) lyase activity and introduces nicks in the DNA strand. Cleaves the DNA backbone by beta-delta elimination to generate a single-strand break at the site of the removed base with both 3'- and 5'-phosphates. This chain is Endonuclease 8, found in Salmonella schwarzengrund (strain CVM19633).